Consider the following 152-residue polypeptide: Superoxide dismutase [Cu-Zn] (152 aa).

H45, H47, and H62 together coordinate Cu cation. Residues 61-87 form a disordered region; that stretch reads PHFNPAGKEHGAPEDENRHAGDLGNAT. Residues H62, H70, H79, and D82 each contribute to the Zn(2+) site. Residues 67 to 81 are compositionally biased toward basic and acidic residues; it reads GKEHGAPEDENRHAG. H119 provides a ligand contact to Cu cation.

Belongs to the Cu-Zn superoxide dismutase family. As to quaternary structure, homodimer. It depends on Cu cation as a cofactor. Zn(2+) serves as cofactor.

It is found in the cytoplasm. The catalysed reaction is 2 superoxide + 2 H(+) = H2O2 + O2. Destroys radicals which are normally produced within the cells and which are toxic to biological systems. This Zingiber officinale (Ginger) protein is Superoxide dismutase [Cu-Zn].